A 353-amino-acid chain; its full sequence is Lipase chaperone (353 aa).

A helical transmembrane segment spans residues 12-32; the sequence is IVLYLILGCVVVCGVWYSFDV.

This sequence belongs to the lipase chaperone family.

It is found in the cell inner membrane. Functionally, may be involved in the folding of the extracellular lipase during its passage through the periplasm. The protein is Lipase chaperone of Xylella fastidiosa (strain M23).